A 686-amino-acid polypeptide reads, in one-letter code: Translation initiation factor IF-2 (686 aa).

The disordered stretch occupies residues 61–98; the sequence is FEVEEKVVRSKKNSNKKKKKGKGNEDKRQENFAGRQQT. The segment covering 69–81 has biased composition (basic residues); the sequence is RSKKNSNKKKKKG. Positions 188–357 constitute a tr-type G domain; that stretch reads ERPAVVTIMG…LLVSEVEEYK (170 aa). The G1 stretch occupies residues 197 to 204; that stretch reads GHVDHGKT. 197–204 lines the GTP pocket; sequence GHVDHGKT. The segment at 222–226 is G2; sequence GITQH. The tract at residues 243–246 is G3; the sequence is DTPG. Residues 243 to 247 and 297 to 300 each bind GTP; these read DTPGH and NKMD. The G4 stretch occupies residues 297–300; sequence NKMD. Positions 333–335 are G5; the sequence is SAI.

Belongs to the TRAFAC class translation factor GTPase superfamily. Classic translation factor GTPase family. IF-2 subfamily.

It localises to the cytoplasm. In terms of biological role, one of the essential components for the initiation of protein synthesis. Protects formylmethionyl-tRNA from spontaneous hydrolysis and promotes its binding to the 30S ribosomal subunits. Also involved in the hydrolysis of GTP during the formation of the 70S ribosomal complex. In Bacillus cereus (strain B4264), this protein is Translation initiation factor IF-2.